A 718-amino-acid chain; its full sequence is Polyribonucleotide nucleotidyltransferase (718 aa).

2 residues coordinate Mg(2+): aspartate 496 and aspartate 502. The 60-residue stretch at 563–622 (PRLLTIKIDSDMIGLVIGPGGKTIKGITEETGAKIDIEDDGTVTISAVDENKAKRARNII) folds into the KH domain. The region spanning 632-700 (GDVYAGRITR…NKGRINLTRL (69 aa)) is the S1 motif domain.

The protein belongs to the polyribonucleotide nucleotidyltransferase family. The cofactor is Mg(2+).

The protein resides in the cytoplasm. The catalysed reaction is RNA(n+1) + phosphate = RNA(n) + a ribonucleoside 5'-diphosphate. In terms of biological role, involved in mRNA degradation. Catalyzes the phosphorolysis of single-stranded polyribonucleotides processively in the 3'- to 5'-direction. In Nostoc punctiforme (strain ATCC 29133 / PCC 73102), this protein is Polyribonucleotide nucleotidyltransferase.